The following is a 285-amino-acid chain: Bifunctional protein FolD (285 aa).

Residues 166–168 and Ile232 contribute to the NADP(+) site; that span reads GAS.

The protein belongs to the tetrahydrofolate dehydrogenase/cyclohydrolase family. As to quaternary structure, homodimer.

It catalyses the reaction (6R)-5,10-methylene-5,6,7,8-tetrahydrofolate + NADP(+) = (6R)-5,10-methenyltetrahydrofolate + NADPH. The enzyme catalyses (6R)-5,10-methenyltetrahydrofolate + H2O = (6R)-10-formyltetrahydrofolate + H(+). It participates in one-carbon metabolism; tetrahydrofolate interconversion. In terms of biological role, catalyzes the oxidation of 5,10-methylenetetrahydrofolate to 5,10-methenyltetrahydrofolate and then the hydrolysis of 5,10-methenyltetrahydrofolate to 10-formyltetrahydrofolate. The protein is Bifunctional protein FolD of Pseudoalteromonas atlantica (strain T6c / ATCC BAA-1087).